We begin with the raw amino-acid sequence, 420 residues long: Methylaspartate ammonia-lyase 1 (420 aa).

Gln173 is a binding site for (2S,3S)-3-methyl-L-aspartate. Asp237, Glu272, and Asp306 together coordinate Mg(2+). Gln328 is a (2S,3S)-3-methyl-L-aspartate binding site. Lys330 functions as the Proton acceptor in the catalytic mechanism. 359-360 (SC) lines the (2S,3S)-3-methyl-L-aspartate pocket.

As to quaternary structure, homodimer. The cofactor is Mg(2+).

The enzyme catalyses (2S,3S)-3-methyl-L-aspartate = mesaconate + NH4(+). It functions in the pathway amino-acid degradation; L-glutamate degradation via mesaconate pathway; acetate and pyruvate from L-glutamate: step 2/4. Involved in the methylaspartate cycle. Catalyzes the formation of the alpha,beta-unsaturated bond by the reversible anti elimination of ammonia from L-threo-beta-methylaspartate (L-threo-(2S,3S)-3-methylaspartate) to give mesaconate. It can also catalyze the amination of fumarate and ethylfumarate, and the deamination of hydroxylamine, hydrazine, methylamine and ethylamine. The polypeptide is Methylaspartate ammonia-lyase 1 (Carboxydothermus hydrogenoformans (strain ATCC BAA-161 / DSM 6008 / Z-2901)).